The chain runs to 748 residues: Catalase-peroxidase 2 (748 aa).

Residues 1-24 are compositionally biased toward polar residues; sequence MSSDTSDSRPPNPDTKTASTSESE. The tract at residues 1-43 is disordered; the sequence is MSSDTSDSRPPNPDTKTASTSESENPAIPSPKPKSGAPLRNQD. The tryptophyl-tyrosyl-methioninium (Trp-Tyr) (with M-264) cross-link spans 113–238; sequence WHSAGTYRIH…YGATTMGLIY (126 aa). Residue His-114 is the Proton acceptor of the active site. The tryptophyl-tyrosyl-methioninium (Tyr-Met) (with W-113) cross-link spans 238–264; the sequence is YVNPEGPEGQPDPLAAAHDIRETFGRM. His-279 serves as a coordination point for heme b.

The protein belongs to the peroxidase family. Peroxidase/catalase subfamily. As to quaternary structure, homotetramer. It depends on heme b as a cofactor. In terms of processing, formation of the three residue Trp-Tyr-Met cross-link is important for the catalase, but not the peroxidase activity of the enzyme.

It carries out the reaction H2O2 + AH2 = A + 2 H2O. The enzyme catalyses 2 H2O2 = O2 + 2 H2O. Bifunctional enzyme with both catalase and broad-spectrum peroxidase activity. May play a role in the intracellular survival of mycobacteria. The chain is Catalase-peroxidase 2 from Mycolicibacterium smegmatis (strain ATCC 700084 / mc(2)155) (Mycobacterium smegmatis).